The chain runs to 497 residues: MKKNNLKYILFPWIKNTPQKKFSNLSLDSRKLTSKDVFIAIKGTKKDGNDFIFEAVKKRVVAILSETKEKKKHGEINYINNIPILSFFKLSEKISNLAARVYKEPAKTLKIIGVTGTNGKTTVTQLINQWSELLGKKIATMGTLGNGFYNALKTTKNTTSSAIDIQSFLHIAAKKKINLVTMEVSSHGLVQNRVKNIPFYIGIFTNLTQDHLDYHKNMKQYESAKWSFFSQHKIKKIILNANDKYAKKWLRKLSDKYTIAVTIQNEKQKKYSTKWINATGIKYNVNSTDVEFESSWGQGILSTCLIGYFNIQNLLLSFASMLEMNYKLSDLINTSIQLQPILGRMQKFDVFGKPKVIIDYAHTPDALKKALNAIKSYYKKKIWCIFGCGGERDQTKRPLMGSISEKIADRVIITNDNPRNENQNKIIKEIVQGCIKKEKIIIIPNREKAISSTFFKANIDDIIFISGKGHENQQIIKNKIINYSDQKVVIKLLEKKI.

Leu-27 and Ser-29 together coordinate UDP-N-acetyl-alpha-D-muramoyl-L-alanyl-D-glutamate. 116 to 122 is a binding site for ATP; sequence GTNGKTT. UDP-N-acetyl-alpha-D-muramoyl-L-alanyl-D-glutamate-binding positions include Asn-157, 158–159, Ser-185, Gln-191, and Arg-193; that span reads TT. Lys-225 bears the N6-carboxylysine mark. Residues Arg-392, 416-419, Gly-467, and Glu-471 contribute to the meso-2,6-diaminopimelate site; that span reads DNPR. The short motif at 416–419 is the Meso-diaminopimelate recognition motif element; the sequence is DNPR.

The protein belongs to the MurCDEF family. MurE subfamily. Mg(2+) serves as cofactor. In terms of processing, carboxylation is probably crucial for Mg(2+) binding and, consequently, for the gamma-phosphate positioning of ATP.

The protein resides in the cytoplasm. It catalyses the reaction UDP-N-acetyl-alpha-D-muramoyl-L-alanyl-D-glutamate + meso-2,6-diaminopimelate + ATP = UDP-N-acetyl-alpha-D-muramoyl-L-alanyl-gamma-D-glutamyl-meso-2,6-diaminopimelate + ADP + phosphate + H(+). It participates in cell wall biogenesis; peptidoglycan biosynthesis. In terms of biological role, catalyzes the addition of meso-diaminopimelic acid to the nucleotide precursor UDP-N-acetylmuramoyl-L-alanyl-D-glutamate (UMAG) in the biosynthesis of bacterial cell-wall peptidoglycan. The polypeptide is UDP-N-acetylmuramoyl-L-alanyl-D-glutamate--2,6-diaminopimelate ligase (Buchnera aphidicola subsp. Schizaphis graminum (strain Sg)).